Here is a 151-residue protein sequence, read N- to C-terminus: MSKTYLPPQESLERDWYVVDATDKRLGRLASEIAMILRGKNKAHYTPHLDTGDFVIVVNAKKVAVTGKKRTQKLYRRHSGRPGGMKTETFAKLQQRLPERIVEHAVKGMLPKNSLGKQLFTKLKVYAGPTHPHDAQKPKELNIHTIPGAES.

This sequence belongs to the universal ribosomal protein uL13 family. Part of the 50S ribosomal subunit.

This protein is one of the early assembly proteins of the 50S ribosomal subunit, although it is not seen to bind rRNA by itself. It is important during the early stages of 50S assembly. In Nostoc sp. (strain PCC 7120 / SAG 25.82 / UTEX 2576), this protein is Large ribosomal subunit protein uL13.